Reading from the N-terminus, the 205-residue chain is Inactive ribonuclease-like protein 9 (205 aa).

Residues 1-26 (MMRTLITTHPLPLLLLPQQLLQPVQF) form the signal peptide. 3 disulfides stabilise this stretch: cysteine 98–cysteine 153, cysteine 116–cysteine 168, and cysteine 123–cysteine 130. Residues asparagine 131 and asparagine 143 are each glycosylated (N-linked (GlcNAc...) asparagine).

The protein belongs to the pancreatic ribonuclease family.

The protein resides in the secreted. In terms of biological role, does not exhibit any ribonuclease activity. The protein is Inactive ribonuclease-like protein 9 (RNASE9) of Pan troglodytes (Chimpanzee).